Consider the following 157-residue polypeptide: Transcription elongation factor GreA (157 aa).

Positions A46–E73 form a coiled coil.

Belongs to the GreA/GreB family.

In terms of biological role, necessary for efficient RNA polymerase transcription elongation past template-encoded arresting sites. The arresting sites in DNA have the property of trapping a certain fraction of elongating RNA polymerases that pass through, resulting in locked ternary complexes. Cleavage of the nascent transcript by cleavage factors such as GreA or GreB allows the resumption of elongation from the new 3'terminus. GreA releases sequences of 2 to 3 nucleotides. The protein is Transcription elongation factor GreA of Acidiphilium cryptum (strain JF-5).